The primary structure comprises 486 residues: UDP-N-acetylmuramoyl-L-alanyl-D-glutamate--2,6-diaminopimelate ligase (486 aa).

Serine 31 serves as a coordination point for UDP-N-acetyl-alpha-D-muramoyl-L-alanyl-D-glutamate. Position 109–115 (109–115) interacts with ATP; sequence GTNGKTT. Residues asparagine 150, 151 to 152, serine 178, and arginine 186 contribute to the UDP-N-acetyl-alpha-D-muramoyl-L-alanyl-D-glutamate site; that span reads TT. An N6-carboxylysine modification is found at lysine 218. Residues arginine 381, 405-408, glycine 455, and glutamate 459 contribute to the meso-2,6-diaminopimelate site; that span reads DNPR. Positions 405–408 match the Meso-diaminopimelate recognition motif motif; that stretch reads DNPR.

The protein belongs to the MurCDEF family. MurE subfamily. The cofactor is Mg(2+). Carboxylation is probably crucial for Mg(2+) binding and, consequently, for the gamma-phosphate positioning of ATP.

It localises to the cytoplasm. The enzyme catalyses UDP-N-acetyl-alpha-D-muramoyl-L-alanyl-D-glutamate + meso-2,6-diaminopimelate + ATP = UDP-N-acetyl-alpha-D-muramoyl-L-alanyl-gamma-D-glutamyl-meso-2,6-diaminopimelate + ADP + phosphate + H(+). It participates in cell wall biogenesis; peptidoglycan biosynthesis. In terms of biological role, catalyzes the addition of meso-diaminopimelic acid to the nucleotide precursor UDP-N-acetylmuramoyl-L-alanyl-D-glutamate (UMAG) in the biosynthesis of bacterial cell-wall peptidoglycan. This is UDP-N-acetylmuramoyl-L-alanyl-D-glutamate--2,6-diaminopimelate ligase from Halalkalibacterium halodurans (strain ATCC BAA-125 / DSM 18197 / FERM 7344 / JCM 9153 / C-125) (Bacillus halodurans).